A 140-amino-acid chain; its full sequence is Nucleoside diphosphate kinase (140 aa).

ATP contacts are provided by Lys11, Phe59, Arg87, Thr93, Arg104, and Asn114. His117 (pros-phosphohistidine intermediate) is an active-site residue.

Belongs to the NDK family. Homotetramer. It depends on Mg(2+) as a cofactor.

It is found in the cytoplasm. The catalysed reaction is a 2'-deoxyribonucleoside 5'-diphosphate + ATP = a 2'-deoxyribonucleoside 5'-triphosphate + ADP. It catalyses the reaction a ribonucleoside 5'-diphosphate + ATP = a ribonucleoside 5'-triphosphate + ADP. Major role in the synthesis of nucleoside triphosphates other than ATP. The ATP gamma phosphate is transferred to the NDP beta phosphate via a ping-pong mechanism, using a phosphorylated active-site intermediate. The chain is Nucleoside diphosphate kinase from Agrobacterium fabrum (strain C58 / ATCC 33970) (Agrobacterium tumefaciens (strain C58)).